The chain runs to 471 residues: Glutamate--tRNA ligase (471 aa).

Residues 9–19 (PSPTGYLHVGG) carry the 'HIGH' region motif. Zn(2+) is bound by residues C98, C100, C125, and H127. Residues 237-241 (KLSKR) carry the 'KMSKS' region motif. K240 is an ATP binding site.

Belongs to the class-I aminoacyl-tRNA synthetase family. Glutamate--tRNA ligase type 1 subfamily. In terms of assembly, monomer. Zn(2+) is required as a cofactor.

The protein resides in the cytoplasm. The catalysed reaction is tRNA(Glu) + L-glutamate + ATP = L-glutamyl-tRNA(Glu) + AMP + diphosphate. In terms of biological role, catalyzes the attachment of glutamate to tRNA(Glu) in a two-step reaction: glutamate is first activated by ATP to form Glu-AMP and then transferred to the acceptor end of tRNA(Glu). The sequence is that of Glutamate--tRNA ligase from Shigella sonnei (strain Ss046).